The sequence spans 135 residues: Phosphomevalonate dehydratase small subunit (135 aa).

Ser-67 acts as the Proton acceptor in catalysis.

Belongs to the AcnX type II small subunit family. As to quaternary structure, heterodimer composed of a large subunit (PMDh-L) and a small subunit (PMDh-S).

The enzyme catalyses (R)-5-phosphomevalonate = (2E)-3-methyl-5-phosphooxypent-2-enoate + H2O. Its pathway is isoprenoid biosynthesis; isopentenyl diphosphate biosynthesis via mevalonate pathway. In terms of biological role, component of a hydro-lyase that catalyzes the dehydration of mevalonate 5-phosphate (MVA5P) to form trans-anhydromevalonate 5-phosphate (tAHMP). Involved in the archaeal mevalonate (MVA) pathway, which provides fundamental precursors for isoprenoid biosynthesis, such as isopentenyl diphosphate (IPP) and dimethylallyl diphosphate (DMAPP). The polypeptide is Phosphomevalonate dehydratase small subunit (Methanopyrus kandleri (strain AV19 / DSM 6324 / JCM 9639 / NBRC 100938)).